The following is a 363-amino-acid chain: Peptide chain release factor 2 (363 aa).

Q251 carries the post-translational modification N5-methylglutamine.

This sequence belongs to the prokaryotic/mitochondrial release factor family. In terms of processing, methylated by PrmC. Methylation increases the termination efficiency of RF2.

The protein resides in the cytoplasm. Its function is as follows. Peptide chain release factor 2 directs the termination of translation in response to the peptide chain termination codons UGA and UAA. This is Peptide chain release factor 2 (prfB) from Helicobacter pylori (strain ATCC 700392 / 26695) (Campylobacter pylori).